A 300-amino-acid chain; its full sequence is GTPase Era (300 aa).

Residues 5–172 (HSGFVAIIGR…LTALTDALPV (168 aa)) form the Era-type G domain. The G1 stretch occupies residues 13 to 20 (GRPNVGKS). Position 13–20 (13–20 (GRPNVGKS)) interacts with GTP. Residues 39–43 (QTTRN) are G2. Positions 60-63 (DTPG) are G3. Residues 60 to 64 (DTPGI) and 122 to 125 (NKID) each bind GTP. Residues 122 to 125 (NKID) form a G4 region. Residues 151-153 (ISA) form a G5 region. Positions 203 to 280 (TRDEVPHAVA…NLKLWVRVQK (78 aa)) constitute a KH type-2 domain.

Belongs to the TRAFAC class TrmE-Era-EngA-EngB-Septin-like GTPase superfamily. Era GTPase family. Monomer.

The protein localises to the cytoplasm. It localises to the cell membrane. Its function is as follows. An essential GTPase that binds both GDP and GTP, with rapid nucleotide exchange. Plays a role in 16S rRNA processing and 30S ribosomal subunit biogenesis and possibly also in cell cycle regulation and energy metabolism. In Lacticaseibacillus paracasei (strain ATCC 334 / BCRC 17002 / CCUG 31169 / CIP 107868 / KCTC 3260 / NRRL B-441) (Lactobacillus paracasei), this protein is GTPase Era.